The chain runs to 171 residues: MECDRISTLPDHLVAKIVSYLGIKDSIKTSVLSKRWEFVWLKVVGLDLKNCDFPPNGIASQMVVNKYMEFNSGLHMQYFKVNFGGNTVCTNRFLEWIATAVDRGVQHLDAENKNPVIIKEFMPKKIYKSKTLVSLKLAIKIFLKARHFISVFIVLQGQSIVQFSSRCGTFS.

The F-box domain occupies 3 to 49 (CDRISTLPDHLVAKIVSYLGIKDSIKTSVLSKRWEFVWLKVVGLDLK).

This chain is Putative F-box protein At1g32020, found in Arabidopsis thaliana (Mouse-ear cress).